The chain runs to 118 residues: UPF0449 protein C19orf25 (118 aa).

At tyrosine 63 the chain carries Phosphotyrosine. The stretch at 81 to 109 (NVLRQRCELLQRAGEDLEREVAQMKQAAL) forms a coiled coil.

This sequence belongs to the UPF0449 family.

This chain is UPF0449 protein C19orf25 (C19orf25), found in Homo sapiens (Human).